The primary structure comprises 295 residues: Mycothiol acetyltransferase (295 aa).

N-acetyltransferase domains lie at 4–138 and 149–295; these read TEWR…RPLT and VRIA…YAAN. Residue aspartate 36 participates in 1D-myo-inositol 2-(L-cysteinylamino)-2-deoxy-alpha-D-glucopyranoside binding. Residues 77 to 79 and 85 to 90 each bind acetyl-CoA; these read LVV and RRGIGA. 1D-myo-inositol 2-(L-cysteinylamino)-2-deoxy-alpha-D-glucopyranoside contacts are provided by glutamate 176, lysine 217, and glutamate 225. Acetyl-CoA-binding positions include 229–231 and 236–242; these read VGV and QGRGLGY. Residue tyrosine 266 coordinates 1D-myo-inositol 2-(L-cysteinylamino)-2-deoxy-alpha-D-glucopyranoside. An acetyl-CoA-binding site is contributed by 271–276; that stretch reads NSAAVN.

Belongs to the acetyltransferase family. MshD subfamily. In terms of assembly, monomer.

It carries out the reaction 1D-myo-inositol 2-(L-cysteinylamino)-2-deoxy-alpha-D-glucopyranoside + acetyl-CoA = mycothiol + CoA + H(+). Functionally, catalyzes the transfer of acetyl from acetyl-CoA to desacetylmycothiol (Cys-GlcN-Ins) to form mycothiol. This chain is Mycothiol acetyltransferase (mshD), found in Mycolicibacterium smegmatis (strain ATCC 700084 / mc(2)155) (Mycobacterium smegmatis).